We begin with the raw amino-acid sequence, 276 residues long: NH(3)-dependent NAD(+) synthetase (276 aa).

G43–S50 serves as a coordination point for ATP. D49 lines the Mg(2+) pocket. A deamido-NAD(+)-binding site is contributed by R146. T166 provides a ligand contact to ATP. E171 is a Mg(2+) binding site. Deamido-NAD(+) contacts are provided by K179 and D186. Residues K195 and T217 each coordinate ATP. H266 to K267 provides a ligand contact to deamido-NAD(+).

This sequence belongs to the NAD synthetase family. In terms of assembly, homodimer.

It catalyses the reaction deamido-NAD(+) + NH4(+) + ATP = AMP + diphosphate + NAD(+) + H(+). Its pathway is cofactor biosynthesis; NAD(+) biosynthesis; NAD(+) from deamido-NAD(+) (ammonia route): step 1/1. Its function is as follows. Catalyzes the ATP-dependent amidation of deamido-NAD to form NAD. Uses ammonia as a nitrogen source. This Aliivibrio fischeri (strain MJ11) (Vibrio fischeri) protein is NH(3)-dependent NAD(+) synthetase.